We begin with the raw amino-acid sequence, 352 residues long: Ribosomal RNA large subunit methyltransferase M (352 aa).

S-adenosyl-L-methionine-binding positions include serine 187, 218-221, aspartate 237, aspartate 257, and aspartate 273; that span reads APGG. Lysine 302 serves as the catalytic Proton acceptor.

This sequence belongs to the class I-like SAM-binding methyltransferase superfamily. RNA methyltransferase RlmE family. RlmM subfamily. As to quaternary structure, monomer.

The protein localises to the cytoplasm. It carries out the reaction cytidine(2498) in 23S rRNA + S-adenosyl-L-methionine = 2'-O-methylcytidine(2498) in 23S rRNA + S-adenosyl-L-homocysteine + H(+). Catalyzes the 2'-O-methylation at nucleotide C2498 in 23S rRNA. This Methylococcus capsulatus (strain ATCC 33009 / NCIMB 11132 / Bath) protein is Ribosomal RNA large subunit methyltransferase M.